A 766-amino-acid polypeptide reads, in one-letter code: Signal transducer and activator of transcription 3.2 (766 aa).

The short motif at 150–162 (DVRKKVQDLEQKM) is the Essential for nuclear import element. One can recognise an SH2 domain in the interval 580 to 670 (WNEGYIIGFI…DATNILVSPL (91 aa)). Serine 725 bears the Phosphoserine; by NLK mark.

Belongs to the transcription factor STAT family. In terms of assembly, forms a homodimer or a heterodimer with a related family member. Interacts with nlk.2. In terms of processing, phosphorylation of both tyrosine and serine residues, together with dimerization, is required for mesoderm induction.

Its subcellular location is the cytoplasm. It localises to the nucleus. Functionally, transcription factor that binds to target promoter sequences and activates transcription upon il6st/gp130 stimulation. Mediates ventralization of embryos, at least in part via inhibition of smad2 signaling. Required for hairy2 to induce dll1/delta1 and promote neural crest cell proliferation and differentiation. Involved in TGFbeta-mediated mesoderm induction in early embryos, acting downstream of map3k7/tak1 and nlk.2. This is Signal transducer and activator of transcription 3.2 (stat3.2) from Xenopus laevis (African clawed frog).